A 213-amino-acid chain; its full sequence is Octanoyltransferase (213 aa).

A BPL/LPL catalytic domain is found at 32 to 207 (DSTLDEIWLV…NILALLNNPD (176 aa)). Substrate-binding positions include 71–78 (RGGQVTYH), 138–140 (SLG), and 151–153 (GLA). Residue cysteine 169 is the Acyl-thioester intermediate of the active site.

Belongs to the LipB family.

It localises to the cytoplasm. The enzyme catalyses octanoyl-[ACP] + L-lysyl-[protein] = N(6)-octanoyl-L-lysyl-[protein] + holo-[ACP] + H(+). Its pathway is protein modification; protein lipoylation via endogenous pathway; protein N(6)-(lipoyl)lysine from octanoyl-[acyl-carrier-protein]: step 1/2. In terms of biological role, catalyzes the transfer of endogenously produced octanoic acid from octanoyl-acyl-carrier-protein onto the lipoyl domains of lipoate-dependent enzymes. Lipoyl-ACP can also act as a substrate although octanoyl-ACP is likely to be the physiological substrate. This is Octanoyltransferase from Escherichia coli O8 (strain IAI1).